The sequence spans 190 residues: Elongation factor P-like protein (190 aa).

It belongs to the elongation factor P family.

The sequence is that of Elongation factor P-like protein from Salmonella gallinarum (strain 287/91 / NCTC 13346).